Consider the following 114-residue polypeptide: Protein D2 (114 aa).

The protein belongs to the phosphatidylethanolamine-binding protein family.

This chain is Protein D2 (D2), found in Onchocerca volvulus.